The following is a 935-amino-acid chain: MSDYKDTLNLPKTSFSMKGNLANKEPMILNKWEKQGIYKKIREHFAGREKFILHDGPPYANGSIHVGHAVNKILKDIIIKSKTLSGYDAPFTPTWDCHGLPIELQVEKKHGKAGQSISEDDFRKECRKYAKKQVEIQKKDFKRLGVLGDWEQPYLTINFDYEANMIRTLAKIIENGHLSKGFKPVHWCTDCGSALAEAEVEYADKVSPAIDVKFKIKDKDKLAQAFGLDSLNHDAFAIIWTTTPWTLPANQAIAVNNQLNYSLIKIEDFYIILAENLVEQTLKRYAIENAQIIATTTGNKLTGIIAEHPFYSRHVPILHGDHVTDDSGTGLVHTAPTHGVDDFTLGKEHNLSMEIFVKGNGCYSENTKLFAGEFIFKANDRIIELLGEKKRLMNSDKIKHSYPHCWRHKTPLMFRATPQWFISMEKQGLRDKALQAIKETSWAPSWGQARIEGMVKDRPDWCISRQRTWGVPLSLFIHKETEELHPNTIEILYKVAEKIEKDGIEAWFNADDCEFITETAQYKSVKDTLDVWFDSGSSSMCILDLDKRLSYPADLYLEGSDQHRGWFQTSLLVAMSAKGSQPYKEVFTHGFVVDEHGRKMSKSLGNVTSPQDIYNTLGADILRLWTASTDYKSEMAVSDQILKRTADTYRRLRNTARFLLSNLDGFNPVTDIIEFDKLVKLDQWAIAKTKEFQDKIIEAYDKYQTHTVAQLIHHFCSIEMGSFYLDIIKDRQYTAKTDGHPRKSAQTAIYHIVHALVRWMAPILSFTADEIWDATLKTTDLPIQLCEWYTGLKSFDQDAELDLEYWAKIQEIRSEVNRVLEIKRNEDVIKASLEAEITIYADKYNYKLLEKLGNELRFLLISSKADLKVIEESTSSSIAANIPGLLIEITKIEEPKCERCWHRSSTVGDNPQYKDICSRCVENITTEAGESREFA.

Residues P58–H68 carry the 'HIGH' region motif. Residue E558 participates in L-isoleucyl-5'-AMP binding. The 'KMSKS' region signature appears at K599 to S603. K602 is a binding site for ATP. Positions 897, 900, 917, and 920 each coordinate Zn(2+).

Belongs to the class-I aminoacyl-tRNA synthetase family. IleS type 1 subfamily. As to quaternary structure, monomer. It depends on Zn(2+) as a cofactor.

The protein localises to the cytoplasm. The enzyme catalyses tRNA(Ile) + L-isoleucine + ATP = L-isoleucyl-tRNA(Ile) + AMP + diphosphate. Its function is as follows. Catalyzes the attachment of isoleucine to tRNA(Ile). As IleRS can inadvertently accommodate and process structurally similar amino acids such as valine, to avoid such errors it has two additional distinct tRNA(Ile)-dependent editing activities. One activity is designated as 'pretransfer' editing and involves the hydrolysis of activated Val-AMP. The other activity is designated 'posttransfer' editing and involves deacylation of mischarged Val-tRNA(Ile). This is Isoleucine--tRNA ligase from Francisella tularensis subsp. mediasiatica (strain FSC147).